The following is a 366-amino-acid chain: MATPVPLVFNAPKRGMPPTHFADLNDEARIEALKELGLPKFRLNQIARHYYGRLEADPLTMTDLPEGARQEVKDALFPTLMSPLRVVETDDDTTQKTLWKLHDGTLLESVLMRYSDRSTLCISSQAGCGMACPFCATGQGGLDRNLSIGEIVDQVRNAAATMQSEGGRLSNIVFMGMGEPLANYKRVVSAVRQITQPSPAGFGISQRSVTVSTVGLAPAIRKLADEEMSVTLAVSLHTPDDELRDTLVPVNNRWPVAEVLDAARYYADKSGRRVSIEYALIRDVNDQDWRADMLGEKLHKALGSRVHVNLIPLNPTPGSKWDAAPKARQDEFVRRVIAKGVPCTVRDTKGQEIAAACGQLAAEESA.

Residue Glu108 is the Proton acceptor of the active site. The Radical SAM core domain occupies 114–352 (YSDRSTLCIS…CTVRDTKGQE (239 aa)). Cysteines 121 and 357 form a disulfide. [4Fe-4S] cluster contacts are provided by Cys128, Cys132, and Cys135. Residues 178 to 179 (GE), Ser212, 235 to 237 (SLH), and Asn314 each bind S-adenosyl-L-methionine. Cys357 serves as the catalytic S-methylcysteine intermediate.

This sequence belongs to the radical SAM superfamily. RlmN family. It depends on [4Fe-4S] cluster as a cofactor.

It localises to the cytoplasm. It carries out the reaction adenosine(2503) in 23S rRNA + 2 reduced [2Fe-2S]-[ferredoxin] + 2 S-adenosyl-L-methionine = 2-methyladenosine(2503) in 23S rRNA + 5'-deoxyadenosine + L-methionine + 2 oxidized [2Fe-2S]-[ferredoxin] + S-adenosyl-L-homocysteine. The enzyme catalyses adenosine(37) in tRNA + 2 reduced [2Fe-2S]-[ferredoxin] + 2 S-adenosyl-L-methionine = 2-methyladenosine(37) in tRNA + 5'-deoxyadenosine + L-methionine + 2 oxidized [2Fe-2S]-[ferredoxin] + S-adenosyl-L-homocysteine. In terms of biological role, specifically methylates position 2 of adenine 2503 in 23S rRNA and position 2 of adenine 37 in tRNAs. This is Probable dual-specificity RNA methyltransferase RlmN from Corynebacterium glutamicum (strain ATCC 13032 / DSM 20300 / JCM 1318 / BCRC 11384 / CCUG 27702 / LMG 3730 / NBRC 12168 / NCIMB 10025 / NRRL B-2784 / 534).